Reading from the N-terminus, the 50-residue chain is Conotoxin Cal6.19 (50 aa).

The N-terminal stretch at 1–22 is a signal peptide; the sequence is MKVTCVLVLTLMALTVCQVATA. 3 disulfide bridges follow: Cys-24-Cys-37, Cys-30-Cys-41, and Cys-36-Cys-46.

Expressed by the venom duct.

Its subcellular location is the secreted. Probable neurotoxin. The polypeptide is Conotoxin Cal6.19 (Californiconus californicus (California cone)).